Reading from the N-terminus, the 240-residue chain is ATP synthase subunit a (240 aa).

6 consecutive transmembrane segments (helical) span residues 41-61 (WLVM…LEII), 92-112 (FFPM…IGLI), 121-141 (SINT…VIGF), 152-172 (FIGP…ISNF), 191-211 (VLLG…PIMV), and 212-232 (LGVL…VVYF).

This sequence belongs to the ATPase A chain family. In terms of assembly, F-type ATPases have 2 components, CF(1) - the catalytic core - and CF(0) - the membrane proton channel. CF(1) has five subunits: alpha(3), beta(3), gamma(1), delta(1), epsilon(1). CF(0) has three main subunits: a(1), b(2) and c(9-12). The alpha and beta chains form an alternating ring which encloses part of the gamma chain. CF(1) is attached to CF(0) by a central stalk formed by the gamma and epsilon chains, while a peripheral stalk is formed by the delta and b chains.

The protein localises to the cell inner membrane. Functionally, key component of the proton channel; it plays a direct role in the translocation of protons across the membrane. In Desulfotalea psychrophila (strain LSv54 / DSM 12343), this protein is ATP synthase subunit a.